The sequence spans 1314 residues: MPSYHNTDKTLLGDARQSLQQAVDYSLGCQQPDGHWVAPVMADATFTAQYVFFKHQIPELSLDEDGPEIQRWLLGEQTADGSWTLAPDLPGNLSTTVEAYLALRILGVPKSDQAMLRARDFVVRNGGVEGVRFFTRFFLATFGLVPWTAIPQMPAELILLPTFMFLNIYVLSSWARSTLIPILLVRHHEPVYALPNGQSANNNFLDELWCNPGEKNIPFALPLWDLLRRYQWIEFAFTLLDHILALFGGLRRWPCRHMALKRCTAWLLEHQEESGDWAGFFPPIHGSIWALLLDGFSFQSEVIRLGMEALERLVVIDPKGKWVQSTVSPCWDTALMANALCDAGMSGDTRLAKATQWLRDRQLMVSHGDWRNYANTQQAGGWSFQYFNSFYPDVDDTAVVIMTLIKEDPNCTNSDCVMNGVEWMLGMQSRDGGWGAFDVNNNARWLHKIPFSDMDSLVDPSTSDVTGRILECLGLLLSQRKSPLSPRWRHRLQASSAKAIAFLAKEQESSGAWWGRWGNNYHYGTANVLRGLAWFAQTDPSAQMMCMRTLSWIDETQNADGGWGETLASYVDKSLAGLGRSTAAHTAWALESLLRFRLPSDQAIERGVRWLIDNQQPNVDGYYYGTKWQAGAGQGASWRFDHAYVGTGFPSVLYLGYPYYHHLFPIQALSRYIDKASRQGIETLRIPSSSAVILDRPNVLLMAMGSRGDIQVFLNVTKRLSSCRVRIATHPAHQAKVEGHGFEFYDVGGSPEVFSAALANGHGILRSIIDGRFRELQHLLRSIYRSFWVAALDDVQSHSPLKPESSSRPFIADVVVSGPSTSVHVHAAERAQAPLVIISTQPAIITGDFQSPLTMSRAQFNPSRLWNRISFHMLAFFDWLSFGPSFNRMRANSYQLRSLDLAWALFEFVKVSVPHVCLWSTSLAPKPEDWDNNVIIAGYSSMSDDADDVASKSLQAFLETRQPVVAISFGSATIEDPMKLIKLMSAALVKVGASSVVCRSWDSSFEAEADLPSNVFLVDSIPHGWLLQHVEGFVHHGGAGHTAAGAKAGVSQLVMPQFLDQFFWATKVSEMGLGPTPLPLRELFLDELAPRMEDLLSSKYTKACTNMALQLRGDVDGADVAGDEILRQVEAITTCCIFPELSAHWYCTESDLSLSGAAAASLVSSKEIQWQDLELRPAKDWEQQWRTVRSSSNLVRIWRAIVQLLYGFTTTILALFGWLKGTHGYLDGDRHLIKMEDPLRQARLEQAQFDLHLIHQACDSGSSTSLDAKIIENWKARKAVVIHEVFDDDSGASESSRSSLDGGHADSVLDIEEK.

The segment at 1-680 is terpenne cyclase; that stretch reads MPSYHNTDKT…RYIDKASRQG (680 aa). PFTB repeat units follow at residues 19 to 62 and 66 to 107; these read LQQA…ELSL and GPEI…RILG. A run of 3 helical transmembrane segments spans residues 133–153, 155–175, and 230–250; these read FFTRFFLATFGLVPWTAIPQM, AELILLPTFMFLNIYVLSSWA, and YQWIEFAFTLLDHILALFGGL. The PFTB 3 repeat unit spans residues 260-300; the sequence is LKRCTAWLLEHQEESGDWAGFFPPIHGSIWALLLDGFSFQS. The Proton donor role is filled by Asp395. PFTB repeat units lie at residues 417–458 and 546–597; these read VMNG…DSLV and CMRT…LRFR. The interval 681-1314 is glycosyltransferase; that stretch reads IETLRIPSSS…ADSVLDIEEK (634 aa). Residues 1200–1220 form a helical membrane-spanning segment; the sequence is AIVQLLYGFTTTILALFGWLK. The segment at 1289 to 1314 is disordered; sequence DSGASESSRSSLDGGHADSVLDIEEK. A compositionally biased stretch (low complexity) spans 1292-1302; that stretch reads ASESSRSSLDG.

It in the N-terminal section; belongs to the terpene cyclase/mutase family. This sequence in the C-terminal section; belongs to the glycosyltransferase 28 family.

It localises to the membrane. Its pathway is secondary metabolite biosynthesis; terpenoid biosynthesis. Functionally, terpene cyclase-glycosyl transferase fusion protein; part of the gene cluster that mediates the biosynthesis of enfumafungin, a glycosylated fernene-type triterpenoid with potent antifungal activity, mediated by its interaction with beta-1,3-glucan synthase and the fungal cell wall. The pathway begins with the terpene cyclase-glycosyl transferase fusion protein that most likely uses 2,3-oxidosqualene as substrate and catalyzes glycosylation immediately after cyclization. The fernene glycoside then could be processed by the desaturase efuI which catalyzes isomerization of a double bond established by efuA to form the core structure. The latter would then undergo a series of hydroxylations in unknown order at C-2, C-19, C-23 and C-25, which would be catalyzed by two of the three cytochrome P450 monooxygenases efuB, efuG or efuH. The hydroxy-group at C-25 becomes oxidized by the dehydrogenase efuE to enable a spontaneous, non-enzymatic hemiacetal formation with C-23. After hydroxylation at C-2, acetylation by the acetyltransferase efuC takes place. The final steps in enfumafungin biosynthesis require expansion of the 5-membered ring by lactonization via a Baeyer-Villiger reaction mediated by one of the BGC's cytochrome P450 monooxygenases (efuB, efuG or efuH) followed by ring cleavage. This type of reaction would establish a double bond between C-20 and C-21 which could be reduced by the reductase efuL to form the final product. This chain is Enfumafungin synthase efuA, found in Hormonema carpetanum.